A 229-amino-acid polypeptide reads, in one-letter code: 2,3-bisphosphoglycerate-dependent phosphoglycerate mutase (229 aa).

Residues 8–15 (RHGESAWN), 21–22 (TG), Arg60, 87–90 (ERHY), Lys98, 114–115 (RR), and 183–184 (GN) each bind substrate. His9 functions as the Tele-phosphohistidine intermediate in the catalytic mechanism. The active-site Proton donor/acceptor is Glu87.

Belongs to the phosphoglycerate mutase family. BPG-dependent PGAM subfamily. Homodimer.

The catalysed reaction is (2R)-2-phosphoglycerate = (2R)-3-phosphoglycerate. It functions in the pathway carbohydrate degradation; glycolysis; pyruvate from D-glyceraldehyde 3-phosphate: step 3/5. Catalyzes the interconversion of 2-phosphoglycerate and 3-phosphoglycerate. In Polynucleobacter necessarius subsp. necessarius (strain STIR1), this protein is 2,3-bisphosphoglycerate-dependent phosphoglycerate mutase.